We begin with the raw amino-acid sequence, 409 residues long: MMMMSLNSKQAFSMPHGGSLHVEPKYSALHSTSPGSSAPIAPSASSPSSSSNAGGGGGGGGGGGGGGGRSSSSSSSGSSGGGGSEAMRRACLPTPPSNIFGGLDESLLARAEALAAVDIVSQSKSHHHHPPHHSPFKPDATYHTMNTIPCTSAASSSSVPISHPSALAGTHHHHHHHHHHHHQPHQALEGELLEHLSPGLALGAMAGPDGAVVSTPAHAPHMATMNPMHQAALSMAHAHGLPSHMGCMSDVDADPRDLEAFAERFKQRRIKLGVTQADVGSALANLKIPGVGSLSQSTICRFESLTLSHNNMIALKPILQAWLEEAEKSHREKLTKPELFNGAEKKRKRTSIAAPEKRSLEAYFAIQPRPSSEKIAAIAEKLDLKKNVVRVWFCNQRQKQKRMKYSAGI.

A disordered region spans residues 26–93; the sequence is YSALHSTSPG…SEAMRRACLP (68 aa). Over residues 31–52 the composition is skewed to low complexity; the sequence is STSPGSSAPIAPSASSPSSSSN. Residues 53–69 show a composition bias toward gly residues; sequence AGGGGGGGGGGGGGGGR. Positions 91 to 237 are required for transcriptional activation; it reads CLPTPPSNIF…MHQAALSMAH (147 aa). The POU-IV box motif lies at 110 to 119; sequence RAEALAAVDI. Over residues 153–166 the composition is skewed to low complexity; that stretch reads AASSSSVPISHPSA. A disordered region spans residues 153–188; the sequence is AASSSSVPISHPSALAGTHHHHHHHHHHHHQPHQAL. The segment covering 170–184 has biased composition (basic residues); it reads THHHHHHHHHHHHQP. The Nuclear speckle targeting signal motif lies at 171–185; sequence HHHHHHHHHHHHQPH. The required for DNA-binding and transcriptional repression stretch occupies residues 238–409; that stretch reads AHGLPSHMGC…QKRMKYSAGI (172 aa). A POU-specific domain is found at 250–327; that stretch reads DVDADPRDLE…ILQAWLEEAE (78 aa). The segment at residues 345 to 404 is a DNA-binding region (homeobox); sequence KKRKRTSIAAPEKRSLEAYFAIQPRPSSEKIAAIAEKLDLKKNVVRVWFCNQRQKQKRMK.

It belongs to the POU transcription factor family. Class-4 subfamily. As to quaternary structure, interacts with POU4F1; this interaction inhibits both POU4F1 DNA-binding and transcriptional activities. Interacts (C-terminus) with ESR1 (via DNA-binding domain); this interaction increases the estrogen receptor ESR1 transcriptional activity in a DNA- and ligand 17-beta-estradiol-independent manner. Interacts (via C-terminus) with TP53 (via N-terminus). Interacts with DLX1 (via homeobox DNA-binding domain); this interaction suppresses DLX1-mediated transcriptional activity in postnatal retina enhancing retinal ganglion cell (RGC) differentiation. Interacts with DLX2 (via homeobox DNA-binding domain); this interaction enhances RGC differentiation. Interacts (via C-terminus) with ISL1 (via C-terminus). Interacts with ISL2. Interacts with LHX2. Expressed in the brain. Expressed in the ganglion cell layer of the retina.

Its subcellular location is the nucleus. It is found in the nucleus speckle. The protein localises to the cytoplasm. In terms of biological role, tissue-specific DNA-binding transcription factor involved in the development and differentiation of target cells. Functions either as activator or repressor modulating the rate of target gene transcription through RNA polymerase II enzyme in a promoter-dependent manner. Binds to the consensus octamer motif 5'-AT[A/T]A[T/A]T[A/T]A-3' of promoter of target genes. Plays a fundamental role in the gene regulatory network essential for retinal ganglion cell (RGC) differentiation. Binds to an octamer site to form a ternary complex with ISL1; cooperates positively with ISL1 and ISL2 to potentiate transcriptional activation of RGC target genes being involved in RGC fate commitment in the developing retina and RGC axon formation and pathfinding. Inhibits DLX1 and DLX2 transcriptional activities preventing DLX1- and DLX2-mediated ability to promote amacrine cell fate specification. In cooperation with TP53 potentiates transcriptional activation of BAX promoter activity increasing neuronal cell apoptosis. Negatively regulates BAX promoter activity in the absence of TP53. Acts as a transcriptional coactivator via its interaction with the transcription factor ESR1 by enhancing its effect on estrogen response element (ERE)-containing promoter. Antagonizes the transcriptional stimulatory activity of POU4F1 by preventing its binding to an octamer motif. Involved in TNFSF11-mediated terminal osteoclast differentiation. This chain is POU domain, class 4, transcription factor 2, found in Homo sapiens (Human).